We begin with the raw amino-acid sequence, 154 residues long: uncharacterized protein (154 aa).

4 helical membrane-spanning segments follow: residues 20–42, 62–84, 91–109, and 113–132; these read FRLFLAFNFFVYGLAKVVIGQFG, FFGYSHVYELFIGFGEILAAVLL, ALGAVIFMPIIVNIVLINY, and IGVQDLSTILMVMCLILLWM.

The protein localises to the cell membrane. This is an uncharacterized protein from Bacillus subtilis (strain 168).